The chain runs to 387 residues: Phosphoglycerate kinase (387 aa).

Substrate is bound by residues aspartate 21–asparagine 23, arginine 36, histidine 59–arginine 62, arginine 113, and arginine 146. ATP is bound by residues lysine 197, glutamate 314, and glycine 340–threonine 343.

The protein belongs to the phosphoglycerate kinase family. In terms of assembly, monomer.

The protein localises to the cytoplasm. The enzyme catalyses (2R)-3-phosphoglycerate + ATP = (2R)-3-phospho-glyceroyl phosphate + ADP. It functions in the pathway carbohydrate degradation; glycolysis; pyruvate from D-glyceraldehyde 3-phosphate: step 2/5. This chain is Phosphoglycerate kinase, found in Pseudomonas fluorescens (strain ATCC BAA-477 / NRRL B-23932 / Pf-5).